Here is a 400-residue protein sequence, read N- to C-terminus: Homoserine O-acetyltransferase (400 aa).

The 310-residue stretch at 64 to 373 (NAILICHALT…TDRGHDAFLL (310 aa)) folds into the AB hydrolase-1 domain. Ser169 acts as the Nucleophile in catalysis. Arg239 contacts substrate. Active-site residues include Asp335 and His368. Asp369 lines the substrate pocket.

Belongs to the AB hydrolase superfamily. MetX family. As to quaternary structure, homodimer.

It localises to the cytoplasm. It carries out the reaction L-homoserine + acetyl-CoA = O-acetyl-L-homoserine + CoA. The protein operates within amino-acid biosynthesis; L-methionine biosynthesis via de novo pathway; O-acetyl-L-homoserine from L-homoserine: step 1/1. Transfers an acetyl group from acetyl-CoA to L-homoserine, forming acetyl-L-homoserine. The chain is Homoserine O-acetyltransferase from Bradyrhizobium diazoefficiens (strain JCM 10833 / BCRC 13528 / IAM 13628 / NBRC 14792 / USDA 110).